Here is a 250-residue protein sequence, read N- to C-terminus: Precorrin-4 C(11)-methyltransferase (250 aa).

It belongs to the precorrin methyltransferase family.

It carries out the reaction precorrin-4 + S-adenosyl-L-methionine = precorrin-5 + S-adenosyl-L-homocysteine. The protein operates within cofactor biosynthesis; adenosylcobalamin biosynthesis; cob(II)yrinate a,c-diamide from precorrin-2 (aerobic route): step 4/10. Catalyzes the methylation of C-11 in precorrin-4 to form precorrin-5. This Pseudomonas aeruginosa (strain ATCC 15692 / DSM 22644 / CIP 104116 / JCM 14847 / LMG 12228 / 1C / PRS 101 / PAO1) protein is Precorrin-4 C(11)-methyltransferase (cobM).